The chain runs to 483 residues: Glycogen synthase (483 aa).

K15 contributes to the ADP-alpha-D-glucose binding site.

Belongs to the glycosyltransferase 1 family. Bacterial/plant glycogen synthase subfamily.

It catalyses the reaction [(1-&gt;4)-alpha-D-glucosyl](n) + ADP-alpha-D-glucose = [(1-&gt;4)-alpha-D-glucosyl](n+1) + ADP + H(+). It functions in the pathway glycan biosynthesis; glycogen biosynthesis. Functionally, synthesizes alpha-1,4-glucan chains using ADP-glucose. This Alkalilimnicola ehrlichii (strain ATCC BAA-1101 / DSM 17681 / MLHE-1) protein is Glycogen synthase.